We begin with the raw amino-acid sequence, 384 residues long: 8-amino-7-oxononanoate synthase (384 aa).

Arg21 contributes to the substrate binding site. Residue 108 to 109 (GF) coordinates pyridoxal 5'-phosphate. Residue His133 coordinates substrate. Positions 179, 207, and 233 each coordinate pyridoxal 5'-phosphate. Position 236 is an N6-(pyridoxal phosphate)lysine (Lys236). Substrate is bound at residue Thr352.

This sequence belongs to the class-II pyridoxal-phosphate-dependent aminotransferase family. BioF subfamily. Homodimer. It depends on pyridoxal 5'-phosphate as a cofactor.

The enzyme catalyses 6-carboxyhexanoyl-[ACP] + L-alanine + H(+) = (8S)-8-amino-7-oxononanoate + holo-[ACP] + CO2. It participates in cofactor biosynthesis; biotin biosynthesis. Its function is as follows. Catalyzes the decarboxylative condensation of pimeloyl-[acyl-carrier protein] and L-alanine to produce 8-amino-7-oxononanoate (AON), [acyl-carrier protein], and carbon dioxide. This Escherichia coli O17:K52:H18 (strain UMN026 / ExPEC) protein is 8-amino-7-oxononanoate synthase.